Consider the following 248-residue polypeptide: MADS-box transcription factor 8 (248 aa).

One can recognise an MADS-box domain in the interval methionine 1 to glutamine 61. Residues valine 90 to leucine 180 enclose the K-box domain.

As to quaternary structure, may interact with the K-box of MADS6 and MADS16. May interact with MADS13 and MADS18. Binds to FCA. In terms of tissue distribution, expressed in lodicules, stamens and carpels.

The protein localises to the nucleus. Probable transcription factor. May be involved in the control of flowering time. The sequence is that of MADS-box transcription factor 8 (MADS8) from Oryza sativa subsp. japonica (Rice).